A 306-amino-acid chain; its full sequence is UDP-3-O-acyl-N-acetylglucosamine deacetylase (306 aa).

3 residues coordinate Zn(2+): histidine 79, histidine 238, and aspartate 242. The active-site Proton donor is the histidine 265.

It belongs to the LpxC family. Requires Zn(2+) as cofactor.

The enzyme catalyses a UDP-3-O-[(3R)-3-hydroxyacyl]-N-acetyl-alpha-D-glucosamine + H2O = a UDP-3-O-[(3R)-3-hydroxyacyl]-alpha-D-glucosamine + acetate. It functions in the pathway glycolipid biosynthesis; lipid IV(A) biosynthesis; lipid IV(A) from (3R)-3-hydroxytetradecanoyl-[acyl-carrier-protein] and UDP-N-acetyl-alpha-D-glucosamine: step 2/6. In terms of biological role, catalyzes the hydrolysis of UDP-3-O-myristoyl-N-acetylglucosamine to form UDP-3-O-myristoylglucosamine and acetate, the committed step in lipid A biosynthesis. The polypeptide is UDP-3-O-acyl-N-acetylglucosamine deacetylase (Shewanella denitrificans (strain OS217 / ATCC BAA-1090 / DSM 15013)).